The sequence spans 909 residues: MRNPALSIDVDRPTSRHVRQNAHLLSDLLIEAITYLEGEEKAELVAKARKAASREDVVNGDAPLLDHLFSDLTTEQAVFLARAFASHSLLANIGEDVAGRRRHAEADAQPGDERPRTLIDAVKALKAAGKSDAELAKIFAAMNVVPVLTAHPTEVRRRSMVDRETEISRLMALRRHHLPPDLEAEIRESLFREIALMWRTRLYRPERITVKDEIRNALSIVRTSILPAIIDLYGDWTGKIGQHGQLAPLLKMGSWLGGDRDGHPGVNGQTLKLALSSQSRVILDWYAGEVRKLWSNLAVSTAYTPVSDELLALAAQAKDPSVHRIDEPYRLALELIFDRLTAVSQKLTGAPVAFASGVTSVEPYAHPDAFVADLSVIIDSLERNGGERLVGSALRTLVEVAKACGFHLMSLDLRQNADVHERTLDELFRRAGTGVEYLKLDEDARCKVLIDELSHQRPLVSPFTAYGEETSKELATMEAAAQAVRDYGHGCLGAYIISKSATLSDMLEPLVLLKQVGLVWGGAAPRASVKVAPLFETIGDLENGPAVLRQWLELPLSRTILGDRPVQEIMLGYSDSNKDGGYVASRRGVATGASALAHEADRMGVGLQLFHGRGGSVGRGGGPAAEAVLAQPAGTVQGRIRMTEQGEMIARRFGDQPTARRNLDGLAAAVLMASERPIPKRDPKVEGAMTALAQSSFEGYRALVYDDAAFEDFFWSVTPISEIVGLNIGSRPASRTASRKIEDLRAIPWVFSWSQARFMLPGWYGFASGVERAGLSVEQLRDLAGNFDFFASLLSNMELALAQSQMGIAARYVALSPDKANAERIFATIRREHEAATGLALAIRGGAALLDNQPDLAESVALASRSVDPLNHLQLELLSRRRAGDIDEELRLAIQLTVAGIAAGLRNTG.

Catalysis depends on residues His-151 and Lys-578.

This sequence belongs to the PEPCase type 1 family. It depends on Mg(2+) as a cofactor.

The catalysed reaction is oxaloacetate + phosphate = phosphoenolpyruvate + hydrogencarbonate. Forms oxaloacetate, a four-carbon dicarboxylic acid source for the tricarboxylic acid cycle. The protein is Phosphoenolpyruvate carboxylase of Caulobacter vibrioides (strain ATCC 19089 / CIP 103742 / CB 15) (Caulobacter crescentus).